A 604-amino-acid polypeptide reads, in one-letter code: Prostaglandin G/H synthase 2 (604 aa).

The signal sequence occupies residues 1–17 (MLARALLLCAAVALSHA). The 38-residue stretch at 18 to 55 (ANPCCSNPCQNRGVCMTMGFDQYKCDCTRTGFYGENCS) folds into the EGF-like domain. Intrachain disulfides connect Cys-21–Cys-32, Cys-22–Cys-145, Cys-26–Cys-42, and Cys-44–Cys-54. Asn-53 carries N-linked (GlcNAc...) asparagine glycosylation. Arg-106 serves as a coordination point for substrate. Residue Asn-130 is glycosylated (N-linked (GlcNAc...) asparagine). His-193 functions as the Proton acceptor in the catalytic mechanism. Tyr-341 is a binding site for substrate. Catalysis depends on Tyr-371, which acts as the For cyclooxygenase activity. A heme b-binding site is contributed by His-374. Residue Asn-396 is glycosylated (N-linked (GlcNAc...) asparagine). Position 526 is an S-nitrosocysteine (Cys-526). Cys-555 and Cys-561 form a disulfide bridge. Ser-565 bears the O-acetylserine mark. A glycan (N-linked (GlcNAc...) asparagine) is linked at Asn-580.

The protein belongs to the prostaglandin G/H synthase family. In terms of assembly, homodimer. Heme b is required as a cofactor. In terms of processing, S-nitrosylation by NOS2 (iNOS) activates enzyme activity. S-nitrosylation may take place on different Cys residues in addition to Cys-526. Acetylated at Ser-565 by SPHK1. During neuroinflammation, acetylation by SPHK1 promotes neuronal secretion of specialized preresolving mediators (SPMs), especially 15-R-lipoxin A4, which results in an increase of phagocytic microglia. In terms of tissue distribution, highest expression in kidney and urinary bladder.

It localises to the microsome membrane. The protein resides in the endoplasmic reticulum membrane. It is found in the nucleus inner membrane. The protein localises to the nucleus outer membrane. It carries out the reaction (5Z,8Z,11Z,14Z)-eicosatetraenoate + AH2 + 2 O2 = prostaglandin H2 + A + H2O. The enzyme catalyses (5Z,8Z,11Z,14Z)-eicosatetraenoate + 2 O2 = prostaglandin G2. The catalysed reaction is prostaglandin G2 + AH2 = prostaglandin H2 + A + H2O. It catalyses the reaction (5Z,8Z,11Z,14Z,17Z)-eicosapentaenoate + 2 O2 = prostaglandin G3. It carries out the reaction prostaglandin G3 + AH2 = prostaglandin H3 + A + H2O. The enzyme catalyses (8Z,11Z,14Z)-eicosatrienoate + 2 O2 = prostaglandin G1. The catalysed reaction is prostaglandin G1 + AH2 = prostaglandin H1 + A + H2O. It catalyses the reaction 2-(5Z,8Z,11Z,14Z)-eicosatetraenoyl-sn-glycero-3-phosphoethanolamine + 2 O2 = 2-(prostaglandin G2)-sn-glycero-3-phosphoethanolamine. It carries out the reaction 2-(prostaglandin G2)-sn-glycero-3-phosphoethanolamine + AH2 = 2-(prostaglandin H2)-sn-glycero-3-phosphoethanolamine + A + H2O. The enzyme catalyses 2-(5Z,8Z,11Z,14Z)-eicosatetraenoyl-sn-glycero-3-phosphocholine + 2 O2 = 2-(prostaglandin G2)-sn-glycero-3-phosphocholine. The catalysed reaction is 2-(prostaglandin G2)-sn-glycero-3-phosphocholine + AH2 = 2-(prostaglandin H2)-sn-glycero-3-phosphocholine + A + H2O. It catalyses the reaction (15S)-hydroperoxy-(5Z,8Z,11Z,13E)-eicosatetraenoate + AH2 = (15S)-hydroxy-(5Z,8Z,11Z,13E)-eicosatetraenoate + A + H2O. It carries out the reaction 2-(5Z,8Z,11Z,14Z)-eicosatetraenoyl-sn-glycero-3-phosphocholine + AH2 + O2 = 2-[(15S)-hydroxy-(5Z,8Z,11Z,13E)-eicosatetraenoyl]-sn-glycero-3-phosphocholine + A + H2O. The enzyme catalyses 2-(5Z,8Z,11Z,14Z)-eicosatetraenoyl-sn-glycero-3-phosphocholine + AH2 + O2 = 2-[(15R)-hydroxy-(5Z,8Z,11Z,13E)-eicosatetraenoyl]-sn-glycero-3-phosphocholine + A + H2O. The catalysed reaction is 2-(5Z,8Z,11Z,14Z)-eicosatetraenoyl-sn-glycero-3-phosphocholine + AH2 + O2 = 2-[(11R)-hydroxy-(5Z,8Z,12E,14Z)-eicosatetraenoyl]-sn-glycero-3-phosphocholine + A + H2O. It catalyses the reaction (9Z,12Z)-octadecadienoate + AH2 + O2 = 9-hydroxy-(10E,12Z)-octadecadienoate + A + H2O. It carries out the reaction (9Z,12Z)-octadecadienoate + AH2 + O2 = 13-hydroxy-(9Z,11E)-octadecadienoate + A + H2O. The enzyme catalyses (5Z,8Z,11Z,14Z)-eicosatetraenoate + AH2 + O2 = (15R)-hydroxy-(5Z,8Z,11Z,13E)-eicosatetraenoate + A + H2O. The catalysed reaction is (5Z,8Z,11Z,14Z)-eicosatetraenoate + AH2 + O2 = (11R)-hydroxy-(5Z,8Z,12E,14Z)-eicosatetraenoate + A + H2O. It catalyses the reaction (5Z,8Z,11Z,14Z,17Z)-eicosapentaenoate + AH2 + O2 = (11R)-hydroxy-(5Z,8Z,12E,14Z,17Z)-eicosapentaenoate + A + H2O. It carries out the reaction (5Z,8Z,11Z,14Z,17Z)-eicosapentaenoate + AH2 + O2 = (18S)-hydroxy-(5Z,8Z,11Z,14Z,16E)-eicosapentaenoate + A + H2O. The enzyme catalyses (5Z,8Z,11Z,14Z,17Z)-eicosapentaenoate + AH2 + O2 = (18R)-hydroxy-(5Z,8Z,11Z,14Z,16E)-eicosapentaenoate + A + H2O. The catalysed reaction is (5Z,8Z,11Z,14Z,17Z)-eicosapentaenoate + AH2 + O2 = (15R)-hydroxy-(5Z,8Z,11Z,13E,17Z)-eicosapentaenoate + A + H2O. It catalyses the reaction (5Z,8Z,11Z,14Z,17Z)-eicosapentaenoate + AH2 + O2 = (15S)-hydroxy-(5Z,8Z,11Z,13E,17Z)-eicosapentaenoate + A + H2O. It carries out the reaction (7Z,10Z,13Z,16Z,19Z)-docosapentaenoate + AH2 + O2 = 13R-hydroxy-(7Z,10Z,14E,16Z,19Z)-docosapentaenoate + A + H2O. The enzyme catalyses (4Z,7Z,10Z,13Z,16Z,19Z)-docosahexaenoate + AH2 + O2 = 13-hydroxy-(4Z,7Z,10Z,14E,16Z,19Z)-docosahexaenoate + A + H2O. The catalysed reaction is (5S)-hydroxy-(6E,8Z,11Z,14Z)-eicosatetraenoate + AH2 + O2 = (5S,15R)-dihydroxy-(6E,8Z,11Z,13E)-eicosatetraenoate + A + H2O. It catalyses the reaction (4Z,7Z,10Z,13Z,16Z,19Z)-docosahexaenoate + AH2 + O2 = 17R-hydroxy-(4Z,7Z,10Z,13Z,15E,19Z)-docosahexaenoate + A + H2O. It carries out the reaction (5S)-hydroxy-(6E,8Z,11Z,14Z)-eicosatetraenoate + AH2 + O2 = (5S,15S)-dihydroxy-(6E,8Z,11Z,13E)-eicosatetraenoate + A + H2O. The enzyme catalyses (5S)-hydroxy-(6E,8Z,11Z,14Z)-eicosatetraenoate + AH2 + O2 = (5S,11R)-dihydroxy-(6E,8Z,12E,14Z)-eicosatetraenoate + A + H2O. The catalysed reaction is 2-(5Z,8Z,11Z,14Z-eicosatetraenoyl)-glycerol + 2 O2 = 2-glyceryl-prostaglandin G2. It catalyses the reaction 2-glyceryl-prostaglandin G2 + AH2 = 2-glyceryl-prostaglandin H2 + A + H2O. It carries out the reaction (5Z,8Z,11Z,14Z)-eicosatetraenoate + O2 = (15R)-hydroperoxy-(5Z,8Z,11Z,13E)-eicosatetraenoate. The enzyme catalyses (5Z,8Z,11Z,14Z)-eicosatetraenoate + O2 = 11R-hydroperoxy-(5Z,8Z,12E,14Z)-eicosatetraenoate. The catalysed reaction is (9Z,12Z)-octadecadienoate + AH2 + O2 = (9R)-hydroxy-(10E,12Z)-octadecadienoate + A + H2O. It catalyses the reaction (9Z,12Z)-octadecadienoate + AH2 + O2 = (9S)-hydroxy-(10E,12Z)-octadecadienoate + A + H2O. It carries out the reaction (9Z,12Z)-octadecadienoate + AH2 + O2 = (13S)-hydroxy-(9Z,11E)-octadecadienoate + A + H2O. The enzyme catalyses (9Z,12Z)-octadecadienoate + AH2 + O2 = (13R)-hydroxy-(9Z,11E)-octadecadienoate + A + H2O. It functions in the pathway lipid metabolism; prostaglandin biosynthesis. Dual cyclooxygenase and peroxidase in the biosynthesis pathway of prostanoids, a class of C20 oxylipins mainly derived from arachidonate ((5Z,8Z,11Z,14Z)-eicosatetraenoate, AA, C20:4(n-6)), with a particular role in the inflammatory response. The cyclooxygenase activity oxygenates AA to the hydroperoxy endoperoxide prostaglandin G2 (PGG2), and the peroxidase activity reduces PGG2 to the hydroxy endoperoxide prostaglandin H2 (PGH2), the precursor of all 2-series prostaglandins and thromboxanes. This complex transformation is initiated by abstraction of hydrogen at carbon 13 (with S-stereochemistry), followed by insertion of molecular O2 to form the endoperoxide bridge between carbon 9 and 11 that defines prostaglandins. The insertion of a second molecule of O2 (bis-oxygenase activity) yields a hydroperoxy group in PGG2 that is then reduced to PGH2 by two electrons. Similarly catalyzes successive cyclooxygenation and peroxidation of dihomo-gamma-linoleate (DGLA, C20:3(n-6)) and eicosapentaenoate (EPA, C20:5(n-3)) to corresponding PGH1 and PGH3, the precursors of 1- and 3-series prostaglandins. In an alternative pathway of prostanoid biosynthesis, converts 2-arachidonoyl lysophopholipids to prostanoid lysophopholipids, which are then hydrolyzed by intracellular phospholipases to release free prostanoids. Metabolizes 2-arachidonoyl glycerol yielding the glyceryl ester of PGH2, a process that can contribute to pain response. Generates lipid mediators from n-3 and n-6 polyunsaturated fatty acids (PUFAs) via a lipoxygenase-type mechanism. Oxygenates PUFAs to hydroperoxy compounds and then reduces them to corresponding alcohols. Plays a role in the generation of resolution phase interaction products (resolvins) during both sterile and infectious inflammation. Metabolizes docosahexaenoate (DHA, C22:6(n-3)) to 17R-HDHA, a precursor of the D-series resolvins (RvDs). As a component of the biosynthetic pathway of E-series resolvins (RvEs), converts eicosapentaenoate (EPA, C20:5(n-3)) primarily to 18S-HEPE that is further metabolized by ALOX5 and LTA4H to generate 18S-RvE1 and 18S-RvE2. In vascular endothelial cells, converts docosapentaenoate (DPA, C22:5(n-3)) to 13R-HDPA, a precursor for 13-series resolvins (RvTs) shown to activate macrophage phagocytosis during bacterial infection. In activated leukocytes, contributes to oxygenation of hydroxyeicosatetraenoates (HETE) to diHETES (5,15-diHETE and 5,11-diHETE). Can also use linoleate (LA, (9Z,12Z)-octadecadienoate, C18:2(n-6)) as substrate and produce hydroxyoctadecadienoates (HODEs) in a regio- and stereospecific manner,being (9R)-HODE ((9R)-hydroxy-(10E,12Z)-octadecadienoate) and (13S)-HODE ((13S)-hydroxy-(9Z,11E)-octadecadienoate) its major products. During neuroinflammation, plays a role in neuronal secretion of specialized preresolving mediators (SPMs) 15R-lipoxin A4 that regulates phagocytic microglia. In Oryctolagus cuniculus (Rabbit), this protein is Prostaglandin G/H synthase 2 (PTGS2).